We begin with the raw amino-acid sequence, 347 residues long: MTEMSFLNSEVLAGDLMSPFDQSGLGAEESLGLLDDYLEVAKHFKPHGFSSDKAGSSEWLAMDGLVSASDTGKEDAFSGTDWMLEKMDLKEFDFDALFRMDDLETMPDELLATLDDTCDLFAPLVQETNKEPPQTVNPIGHLPESVIKVDQAAPFTFLQPLPCSPGFLSSTPDHSFSLELGSEVDISEGDRKPDSAAYITLTPQCVKEEDTPSDSDSGICMSPESYLGSPQHSPSTSRAPPDSLPSPGVPRGSRPKPYDPPGVSVTAKVKTEKLDKKLKKMEQNKTAATRYRQKKRAEQEALTGECKELEKKNEALKEKADSLAKEIQYLKDLIEEVRKARGKKRVP.

The interval 202–296 is disordered; it reads TPQCVKEEDT…AATRYRQKKR (95 aa). Thr-211 bears the Phosphothreonine mark. Phosphoserine occurs at positions 213, 217, 222, 229, and 233. The BetaTrCP degron motif motif lies at 213-222; sequence SDSDSGICMS. Polar residues predominate over residues 228 to 238; sequence GSPQHSPSTSR. Residue Pro-234 is modified to 4-hydroxyproline. Residues Ser-243 and Ser-246 each carry the phosphoserine modification. Glycyl lysine isopeptide (Lys-Gly) (interchain with G-Cter in SUMO2) cross-links involve residues Lys-256 and Lys-268. Over residues 269-283 the composition is skewed to basic and acidic residues; the sequence is VKTEKLDKKLKKMEQ. The bZIP domain maps to 274–337; sequence LDKKLKKMEQ…QYLKDLIEEV (64 aa). The segment at 276–296 is basic motif; that stretch reads KKLKKMEQNKTAATRYRQKKR. The tract at residues 301 to 337 is interaction with GABBR1; it reads ALTGECKELEKKNEALKEKADSLAKEIQYLKDLIEEV. Residues 302 to 330 form a leucine-zipper region; sequence LTGECKELEKKNEALKEKADSLAKEIQYL. Lys-307 bears the N6-acetyllysine mark.

The protein belongs to the bZIP family. As to quaternary structure, binds DNA as a homodimer and as a heterodimer. Heterodimer; heterodimerizes with CEBPB. Heterodimer; heterodimerizes with DDIT3/CHOP. Interacts with CEP290 (via an N-terminal region). Interacts with NEK6, DAPK2 (isoform 2) and ZIPK/DAPK3. Interacts (via its leucine zipper domain) with GABBR1 and GABBR2 (via their C-termini). Forms a heterodimer with TXLNG in osteoblasts. Interacts (via its DNA binding domain) with FOXO1 (C-terminal half); the interaction occurs in osteoblasts and regulates glucose homeostasis through suppression of beta-cell proliferation and a decrease in insulin production. Interacts with SATB2; the interaction results in enhanced DNA binding and transactivation by these transcription factors. Interacts with ABRAXAS2. Interacts with TRIB3, inhibiting the transactivation activity of ATF4. Interacts with DISC1; which inhibits ATF4 transcription factor activity by disrupting ATF4 dimerization and DNA-binding. Interacts with EP300/p300; EP300/p300 stabilizes ATF4 and increases its transcriptional activity independently of its catalytic activity by preventing its ubiquitination. Post-translationally, ubiquitinated by SCF(BTRC) in response to mTORC1 signal, followed by proteasomal degradation and leading to down-regulate expression of SIRT4. Interaction with EP300/p300 inhibits ubiquitination by SCF(BTRC). Phosphorylation at Ser-243 by RPS6KA3/RSK2 in osteoblasts enhances transactivation activity and promotes osteoblast differentiation. Phosphorylated on the betaTrCP degron motif at Ser-217, followed by phosphorylation at Thr-211, Ser-222, Ser-229, Ser-233 and Ser-246, promoting interaction with BTRC and ubiquitination. Phosphorylation is promoted by mTORC1. Phosphorylation at Ser-213 by CK2 decreases its stability. Phosphorylated by NEK6. In terms of processing, hydroxylated by PHD3, leading to decreased protein stability. Expressed in brain, heart, liver, spleen, lung and muscle, but not testis.

The protein resides in the nucleus. The protein localises to the nucleus speckle. It is found in the cytoplasm. It localises to the cell membrane. Its subcellular location is the cytoskeleton. The protein resides in the microtubule organizing center. The protein localises to the centrosome. Functionally, transcription factor that binds the cAMP response element (CRE) (consensus: 5'-GTGACGT[AC][AG]-3') and displays two biological functions, as regulator of metabolic and redox processes under normal cellular conditions, and as master transcription factor during integrated stress response (ISR). Binds to asymmetric CRE's as a heterodimer and to palindromic CRE's as a homodimer. Core effector of the ISR, which is required for adaptation to various stress such as endoplasmic reticulum (ER) stress, amino acid starvation, mitochondrial stress or oxidative stress. During ISR, ATF4 translation is induced via an alternative ribosome translation re-initiation mechanism in response to EIF2S1/eIF-2-alpha phosphorylation, and stress-induced ATF4 acts as a master transcription factor of stress-responsive genes in order to promote cell recovery. Promotes the transcription of genes linked to amino acid sufficiency and resistance to oxidative stress to protect cells against metabolic consequences of ER oxidation. Activates the transcription of NLRP1, possibly in concert with other factors in response to ER stress. Activates the transcription of asparagine synthetase (ASNS) in response to amino acid deprivation or ER stress. However, when associated with DDIT3/CHOP, the transcriptional activation of the ASNS gene is inhibited in response to amino acid deprivation. Together with DDIT3/CHOP, mediates programmed cell death by promoting the expression of genes involved in cellular amino acid metabolic processes, mRNA translation and the terminal unfolded protein response (terminal UPR), a cellular response that elicits programmed cell death when ER stress is prolonged and unresolved. Activates the expression of COX7A2L/SCAF1 downstream of the EIF2AK3/PERK-mediated unfolded protein response, thereby promoting formation of respiratory chain supercomplexes and increasing mitochondrial oxidative phosphorylation. Together with DDIT3/CHOP, activates the transcription of the IRS-regulator TRIB3 and promotes ER stress-induced neuronal cell death by regulating the expression of BBC3/PUMA in response to ER stress. May cooperate with the UPR transcriptional regulator QRICH1 to regulate ER protein homeostasis which is critical for cell viability in response to ER stress. In the absence of stress, ATF4 translation is at low levels and it is required for normal metabolic processes such as embryonic lens formation, fetal liver hematopoiesis, bone development and synaptic plasticity. Acts as a regulator of osteoblast differentiation in response to phosphorylation by RPS6KA3/RSK2: phosphorylation in osteoblasts enhances transactivation activity and promotes expression of osteoblast-specific genes and post-transcriptionally regulates the synthesis of Type I collagen, the main constituent of the bone matrix. Cooperates with FOXO1 in osteoblasts to regulate glucose homeostasis through suppression of beta-cell production and decrease in insulin production. Activates transcription of SIRT4. Regulates the circadian expression of the core clock component PER2 and the serotonin transporter SLC6A4. Binds in a circadian time-dependent manner to the cAMP response elements (CRE) in the SLC6A4 and PER2 promoters and periodically activates the transcription of these genes. Mainly acts as a transcriptional activator in cellular stress adaptation, but it can also act as a transcriptional repressor: acts as a regulator of synaptic plasticity by repressing transcription, thereby inhibiting induction and maintenance of long-term memory. Regulates synaptic functions via interaction with DISC1 in neurons, which inhibits ATF4 transcription factor activity by disrupting ATF4 dimerization and DNA-binding. In Rattus norvegicus (Rat), this protein is Cyclic AMP-dependent transcription factor ATF-4.